Consider the following 119-residue polypeptide: Beta-2-microglobulin (119 aa).

Residues M1–A21 form the signal peptide. The region spanning P25 to Y113 is the Ig-like C1-type domain. The cysteines at positions 45 and 100 are disulfide-linked.

This sequence belongs to the beta-2-microglobulin family. In terms of assembly, heterodimer of an alpha chain and a beta chain. Beta-2-microglobulin is the beta-chain of major histocompatibility complex class I molecules.

Its subcellular location is the secreted. Its function is as follows. Component of the class I major histocompatibility complex (MHC). Involved in the presentation of peptide antigens to the immune system. The protein is Beta-2-microglobulin (B2M) of Gallus gallus (Chicken).